We begin with the raw amino-acid sequence, 313 residues long: Serine/threonine-protein phosphatase PP2A-3 catalytic subunit (313 aa).

Residues Asp61, His63, Asp89, and Asn121 each coordinate Mn(2+). The active-site Proton donor is His122. Residues His171 and His245 each contribute to the Mn(2+) site. A Leucine methyl ester modification is found at Leu313.

Belongs to the PPP phosphatase family. PP-2A subfamily. In terms of assembly, PP2A consists of a common heterodimeric core enzyme, composed of a 36 kDa catalytic subunit (subunit C) and a 65 kDa constant regulatory subunit (subunit A), that associates with a variety of regulatory subunits such as subunits B (the R2/B/PR55/B55, R3/B''/PR72/PR130/PR59 and R5/B'/B56 families). Interacts with ACR4. Interacts with TAP46. Interacts with SIC/RON3. It depends on Mn(2+) as a cofactor. Reversibly methyl esterified on Leu-313 by leucine carboxyl methyltransferase 1 (LCMT1) and pectin methylesterase 1 (PME1). Carboxyl methylation influences the affinity of the catalytic subunit for the different regulatory subunits, thereby modulating the PP2A holoenzyme's substrate specificity, enzyme activity and cellular localization. In terms of processing, phosphorylation of either threonine (by autophosphorylation-activated protein kinase) or tyrosine results in inactivation of the phosphatase. Auto-dephosphorylation has been suggested as a mechanism for reactivation.

It localises to the cytoplasm. The enzyme catalyses O-phospho-L-seryl-[protein] + H2O = L-seryl-[protein] + phosphate. The catalysed reaction is O-phospho-L-threonyl-[protein] + H2O = L-threonyl-[protein] + phosphate. Its function is as follows. Functions redundantly with PP2A4, and is involved in establishing auxin gradients, apical-basal axis of polarity and root and shoot apical meristem during embryogenesis. May dephosphorylate PIN1 and regulate its subcellular distribution for polar auxin transport. Involved in the regulation of formative cell division in roots by dephosphorylating ACR4 protein kinase. The sequence is that of Serine/threonine-protein phosphatase PP2A-3 catalytic subunit from Arabidopsis thaliana (Mouse-ear cress).